The primary structure comprises 297 residues: NADH-ubiquinone oxidoreductase chain 1 (297 aa).

The next 9 membrane-spanning stretches (helical) occupy residues 1-21 (MKSL…TLAE), 34-54 (PNHV…KLIL), 66-86 (WLFV…WLVI), 99-119 (LSIL…IYTG), 139-159 (VSYE…GATL), 170-190 (GTVL…AALA), 206-228 (LVAG…GEYA), 235-257 (TVLN…IWIR), and 277-297 (LPFL…LDLF).

It belongs to the complex I subunit 1 family.

The protein localises to the mitochondrion inner membrane. The enzyme catalyses a ubiquinone + NADH + 5 H(+)(in) = a ubiquinol + NAD(+) + 4 H(+)(out). Core subunit of the mitochondrial membrane respiratory chain NADH dehydrogenase (Complex I) that is believed to belong to the minimal assembly required for catalysis. Complex I functions in the transfer of electrons from NADH to the respiratory chain. The immediate electron acceptor for the enzyme is believed to be ubiquinone. In Hyaloraphidium curvatum (Lower fungus), this protein is NADH-ubiquinone oxidoreductase chain 1.